A 179-amino-acid chain; its full sequence is Large ribosomal subunit protein uL5 (179 aa).

The protein belongs to the universal ribosomal protein uL5 family. Part of the 50S ribosomal subunit; part of the 5S rRNA/L5/L18/L25 subcomplex. Contacts the 5S rRNA and the P site tRNA. Forms a bridge to the 30S subunit in the 70S ribosome.

Its function is as follows. This is one of the proteins that bind and probably mediate the attachment of the 5S RNA into the large ribosomal subunit, where it forms part of the central protuberance. In the 70S ribosome it contacts protein S13 of the 30S subunit (bridge B1b), connecting the 2 subunits; this bridge is implicated in subunit movement. Contacts the P site tRNA; the 5S rRNA and some of its associated proteins might help stabilize positioning of ribosome-bound tRNAs. The polypeptide is Large ribosomal subunit protein uL5 (Geobacter sulfurreducens (strain ATCC 51573 / DSM 12127 / PCA)).